A 253-amino-acid chain; its full sequence is MYLEKIVETKREEVAKLKEKKISLKDSFQKGKLTLIAEIKKASPSKGIISTNFDPQRQLELYIKGGADAISILTDEKYFQGSTNILKELRPKTNLPILRKDFIIDPIQIYQSLFLGANVILLIASILTKKEISNFLKISKDIGLEAIVEVHNHQELTKVLDTETEILGINNRDLSDFSLSLRNTEKLLEELEKLGKRRDFYVISESGIKEKSDIDYLRSLEVDGVLIGEALMKENDPVLKIGELFPEKRSNLQ.

Belongs to the TrpC family.

It catalyses the reaction 1-(2-carboxyphenylamino)-1-deoxy-D-ribulose 5-phosphate + H(+) = (1S,2R)-1-C-(indol-3-yl)glycerol 3-phosphate + CO2 + H2O. It participates in amino-acid biosynthesis; L-tryptophan biosynthesis; L-tryptophan from chorismate: step 4/5. In Petrotoga mobilis (strain DSM 10674 / SJ95), this protein is Indole-3-glycerol phosphate synthase.